A 181-amino-acid polypeptide reads, in one-letter code: ATP synthase subunit delta (181 aa).

It belongs to the ATPase delta chain family. In terms of assembly, F-type ATPases have 2 components, F(1) - the catalytic core - and F(0) - the membrane proton channel. F(1) has five subunits: alpha(3), beta(3), gamma(1), delta(1), epsilon(1). F(0) has three main subunits: a(1), b(2) and c(10-14). The alpha and beta chains form an alternating ring which encloses part of the gamma chain. F(1) is attached to F(0) by a central stalk formed by the gamma and epsilon chains, while a peripheral stalk is formed by the delta and b chains.

It is found in the cell membrane. In terms of biological role, f(1)F(0) ATP synthase produces ATP from ADP in the presence of a proton or sodium gradient. F-type ATPases consist of two structural domains, F(1) containing the extramembraneous catalytic core and F(0) containing the membrane proton channel, linked together by a central stalk and a peripheral stalk. During catalysis, ATP synthesis in the catalytic domain of F(1) is coupled via a rotary mechanism of the central stalk subunits to proton translocation. Its function is as follows. This protein is part of the stalk that links CF(0) to CF(1). It either transmits conformational changes from CF(0) to CF(1) or is implicated in proton conduction. The chain is ATP synthase subunit delta from Desulforamulus reducens (strain ATCC BAA-1160 / DSM 100696 / MI-1) (Desulfotomaculum reducens).